The sequence spans 247 residues: tRNA pseudouridine synthase A (247 aa).

Asp52 (nucleophile) is an active-site residue. Tyr110 serves as a coordination point for substrate.

The protein belongs to the tRNA pseudouridine synthase TruA family. In terms of assembly, homodimer.

It carries out the reaction uridine(38/39/40) in tRNA = pseudouridine(38/39/40) in tRNA. Functionally, formation of pseudouridine at positions 38, 39 and 40 in the anticodon stem and loop of transfer RNAs. This Geobacter sp. (strain M21) protein is tRNA pseudouridine synthase A.